A 952-amino-acid polypeptide reads, in one-letter code: Eukaryotic initiation factor 4F subunit p150 (952 aa).

3 disordered regions span residues 1–77 (MTDE…NYNG), 115–389 (GSAP…DAGT), and 481–575 (VIPP…LVPS). Positions 7 to 16 (HPTQSASKQE) are enriched in polar residues. Residues 29-46 (ESQQQRGYTNYNNGSNYT) show a composition bias toward low complexity. Over residues 47-56 (QKKPYNSNRP) the composition is skewed to polar residues. A compositionally biased stretch (low complexity) spans 65 to 74 (GPNRYNNRGN). Basic and acidic residues predominate over residues 140 to 151 (SGEHLDLKEQHK). Over residues 154-166 (LQSQERSTVSPQP) the composition is skewed to polar residues. The residue at position 163 (Ser163) is a Phosphoserine. Low complexity predominate over residues 175–191 (DSTSTSTPTPTPSTNDS). Phosphothreonine is present on Thr181. Residues 188-299 (TNDSKASSEE…KEESTPKVLT (112 aa)) are interaction with PAB1. Ser195 bears the Phosphoserine mark. Over residues 218 to 228 (AALEKKRKEQL) the composition is skewed to basic and acidic residues. Residues 229-244 (EGSSGNNNIPMKTTPE) show a composition bias toward polar residues. 3 stretches are compositionally biased toward basic and acidic residues: residues 246 to 276 (VEEKGSDKPEVTEKTKPAEEKSAEPEVKQET), 283 to 294 (QGEKGQIKEEST), and 309 to 333 (QQKEREEKTEGKENKEVPVQEETKS). The span at 355–368 (TEQSNIDESATTPA) shows a compositional bias: polar residues. At Ser503 the chain carries Phosphoserine. 2 stretches are compositionally biased toward basic and acidic residues: residues 504–521 (RGHDFRNTSVRNMDDRAN) and 532–569 (RMNDDRRSNRSYTSRRDRERGSYRNEEKREDDKPKEEV). The 244-residue stretch at 607–850 (ERKMKSLLNK…IDIKELRHDK (244 aa)) folds into the MIF4G domain. Positions 870-952 (EEERQRQLKN…ALMGESDDEE (83 aa)) are disordered. Residues 879–894 (NNSRSNSRRTNNSSNR) are compositionally biased toward low complexity. Ser883 is modified (phosphoserine). At Thr888 the chain carries Phosphothreonine. Phosphoserine is present on residues Ser892, Ser896, Ser908, and Ser948. A compositionally biased stretch (polar residues) spans 908–922 (SFITTRTYSQRNSQR).

This sequence belongs to the eukaryotic initiation factor 4G family. As to quaternary structure, component of the eIF4F complex, which composition varies with external and internal environmental conditions. It is composed of at least eIF4A (TIF1/TIF2), eIF4E (TIF45) and eIF4G (TIF4631 or TIF4632). Interacts with PAT1 in a RNA-dependent manner.

It is found in the cytoplasm. The protein resides in the P-body. The protein localises to the stress granule. Functionally, component of the eIF4F complex, which interacts with the mRNA cap structure and serves as an initial point of assembly for the translation apparatus. Stimulates translation by interaction with polyadenylate-binding protein PAB1, bringing the 5'- and 3'-ends of the mRNA in proximity. The formation of this circular mRNP structure appears to be critical for the synergistic effects of the cap and the poly(A) tail in facilitating translation initiation, recycling of ribosomes, and mRNA stability. TIF4631 is probably essential when TIF4632 is missing. This chain is Eukaryotic initiation factor 4F subunit p150, found in Saccharomyces cerevisiae (strain ATCC 204508 / S288c) (Baker's yeast).